The following is a 309-amino-acid chain: Probable lipid kinase YegS-like (309 aa).

Residues 1–134 (MAPSHWRLIL…IDLLRIDADH (134 aa)) form the DAGKc domain. ATP-binding positions include Thr39, 65-71 (GDGTLSE), and Thr96. 3 residues coordinate Mg(2+): Leu219, Asp222, and Leu224. Catalysis depends on Glu280, which acts as the Proton acceptor.

This sequence belongs to the diacylglycerol/lipid kinase family. YegS lipid kinase subfamily. Mg(2+) serves as cofactor. It depends on Ca(2+) as a cofactor.

It is found in the cytoplasm. Probably phosphorylates lipids; the in vivo substrate is unknown. This chain is Probable lipid kinase YegS-like, found in Xanthomonas campestris pv. campestris (strain 8004).